Reading from the N-terminus, the 180-residue chain is UPF0227 protein YcfP (180 aa).

Belongs to the UPF0227 family.

This Salmonella paratyphi A (strain ATCC 9150 / SARB42) protein is UPF0227 protein YcfP.